The chain runs to 156 residues: 6,7-dimethyl-8-ribityllumazine synthase (156 aa).

Residues Phe-23, 57-59 (AFE), and 81-83 (TVI) contribute to the 5-amino-6-(D-ribitylamino)uracil site. 86–87 (ST) contributes to the (2S)-2-hydroxy-3-oxobutyl phosphate binding site. The active-site Proton donor is the His-89. Phe-114 is a binding site for 5-amino-6-(D-ribitylamino)uracil. Position 128 (Arg-128) interacts with (2S)-2-hydroxy-3-oxobutyl phosphate.

The protein belongs to the DMRL synthase family. In terms of assembly, forms an icosahedral capsid composed of 60 subunits, arranged as a dodecamer of pentamers.

The catalysed reaction is (2S)-2-hydroxy-3-oxobutyl phosphate + 5-amino-6-(D-ribitylamino)uracil = 6,7-dimethyl-8-(1-D-ribityl)lumazine + phosphate + 2 H2O + H(+). The protein operates within cofactor biosynthesis; riboflavin biosynthesis; riboflavin from 2-hydroxy-3-oxobutyl phosphate and 5-amino-6-(D-ribitylamino)uracil: step 1/2. Its function is as follows. Catalyzes the formation of 6,7-dimethyl-8-ribityllumazine by condensation of 5-amino-6-(D-ribitylamino)uracil with 3,4-dihydroxy-2-butanone 4-phosphate. This is the penultimate step in the biosynthesis of riboflavin. This chain is 6,7-dimethyl-8-ribityllumazine synthase, found in Halalkalibacterium halodurans (strain ATCC BAA-125 / DSM 18197 / FERM 7344 / JCM 9153 / C-125) (Bacillus halodurans).